The sequence spans 355 residues: 4-hydroxy-3-methylbut-2-en-1-yl diphosphate synthase (flavodoxin) (355 aa).

The [4Fe-4S] cluster site is built by C266, C269, C301, and E308.

Belongs to the IspG family. [4Fe-4S] cluster is required as a cofactor.

It catalyses the reaction (2E)-4-hydroxy-3-methylbut-2-enyl diphosphate + oxidized [flavodoxin] + H2O + 2 H(+) = 2-C-methyl-D-erythritol 2,4-cyclic diphosphate + reduced [flavodoxin]. It functions in the pathway isoprenoid biosynthesis; isopentenyl diphosphate biosynthesis via DXP pathway; isopentenyl diphosphate from 1-deoxy-D-xylulose 5-phosphate: step 5/6. Its function is as follows. Converts 2C-methyl-D-erythritol 2,4-cyclodiphosphate (ME-2,4cPP) into 1-hydroxy-2-methyl-2-(E)-butenyl 4-diphosphate. This chain is 4-hydroxy-3-methylbut-2-en-1-yl diphosphate synthase (flavodoxin), found in Caldanaerobacter subterraneus subsp. tengcongensis (strain DSM 15242 / JCM 11007 / NBRC 100824 / MB4) (Thermoanaerobacter tengcongensis).